Here is a 462-residue protein sequence, read N- to C-terminus: Tissue alpha-L-fucosidase (462 aa).

The signal sequence occupies residues 1–28 (MWDLKSEWWAVGFGLLLLLAASAQAGGL). N-linked (GlcNAc...) asparagine glycans are attached at residues Asn237, Asn264, and Asn378.

Belongs to the glycosyl hydrolase 29 family. As to quaternary structure, homotetramer.

The protein resides in the lysosome. The enzyme catalyses an alpha-L-fucoside + H2O = L-fucose + an alcohol. It catalyses the reaction a neolactoside IV(2)-alpha-Fuc-nLc4Cer(d18:1(4E)) + H2O = a neolactoside nLc4Cer(d18:1(4E)) + L-fucose. The catalysed reaction is a neolactoside IV(2)-alpha-Fuc-nLc4Cer(d18:0) + H2O = a neolactoside nLc4Cer(d18:0) + L-fucose. Functionally, alpha-L-fucosidase is responsible for hydrolyzing the alpha-1,6-linked fucose joined to the reducing-end N-acetylglucosamine of the carbohydrate moieties of glycoproteins. The polypeptide is Tissue alpha-L-fucosidase (Fuca1) (Rattus norvegicus (Rat)).